Consider the following 1134-residue polypeptide: DNA damage-binding protein 1 (1134 aa).

The protein belongs to the DDB1 family. Interacts with cdt-1 and cul-4. In terms of tissue distribution, expressed at high levels in the spermatheca of adult hermaphrodites.

The protein localises to the cytoplasm. The protein resides in the nucleus. It participates in protein modification; protein ubiquitination. In terms of biological role, plays a role in DNA repair. May be a component of an E3 ubiquitin-protein ligase which promotes histone ubiquitination in response to UV irradiation. Histone ubiquitination may be important for subsequent DNA repair. Promotes the degradation of the replication licensing factor cdt-1 during S-phase, thereby preventing rereplication of DNA during a single round of cell division. The sequence is that of DNA damage-binding protein 1 (ddb-1) from Caenorhabditis elegans.